The sequence spans 185 residues: ATP synthase subunit delta (185 aa).

The protein belongs to the ATPase delta chain family. In terms of assembly, F-type ATPases have 2 components, F(1) - the catalytic core - and F(0) - the membrane proton channel. F(1) has five subunits: alpha(3), beta(3), gamma(1), delta(1), epsilon(1). CF(0) has four main subunits: a(1), b(1), b'(1) and c(10-14). The alpha and beta chains form an alternating ring which encloses part of the gamma chain. F(1) is attached to F(0) by a central stalk formed by the gamma and epsilon chains, while a peripheral stalk is formed by the delta, b and b' chains.

Its subcellular location is the cellular thylakoid membrane. F(1)F(0) ATP synthase produces ATP from ADP in the presence of a proton or sodium gradient. F-type ATPases consist of two structural domains, F(1) containing the extramembraneous catalytic core and F(0) containing the membrane proton channel, linked together by a central stalk and a peripheral stalk. During catalysis, ATP synthesis in the catalytic domain of F(1) is coupled via a rotary mechanism of the central stalk subunits to proton translocation. Functionally, this protein is part of the stalk that links CF(0) to CF(1). It either transmits conformational changes from CF(0) to CF(1) or is implicated in proton conduction. In terms of biological role, the complex from the organism is particularly stable to disruption and remains functional after 6 hrs at 55 degrees Celsius. The sequence is that of ATP synthase subunit delta from Thermosynechococcus vestitus (strain NIES-2133 / IAM M-273 / BP-1).